The following is a 202-amino-acid chain: MSRYRGPRLRVVRRLGELPGLSRKNPRRAYPPGQHGQARKKRSEYAIRLEEKQKLRFNYGVTEGQLIRYVKKARRATGSTGQKLLELLEMRLDNTVFRLGMAGTIPAARQLVNHGHITVNGKVVDIPSYQCRPGEVIAVRNQERSRRLVEANMQYPGLANLPSHLEFDKNTLTGKVNAVIEREWIALQINELLVVEYYSRKA.

The disordered stretch occupies residues Gly-16–Arg-42. In terms of domain architecture, S4 RNA-binding spans Met-90–Ala-151.

The protein belongs to the universal ribosomal protein uS4 family. Part of the 30S ribosomal subunit. Contacts protein S5. The interaction surface between S4 and S5 is involved in control of translational fidelity.

Its function is as follows. One of the primary rRNA binding proteins, it binds directly to 16S rRNA where it nucleates assembly of the body of the 30S subunit. In terms of biological role, with S5 and S12 plays an important role in translational accuracy. This chain is Small ribosomal subunit protein uS4, found in Rippkaea orientalis (strain PCC 8801 / RF-1) (Cyanothece sp. (strain PCC 8801)).